Reading from the N-terminus, the 51-residue chain is Large ribosomal subunit protein eL39 (51 aa).

It belongs to the eukaryotic ribosomal protein eL39 family.

The protein is Large ribosomal subunit protein eL39 (rpl39e) of Pyrococcus horikoshii (strain ATCC 700860 / DSM 12428 / JCM 9974 / NBRC 100139 / OT-3).